The sequence spans 331 residues: Anthranilate phosphoribosyltransferase (331 aa).

5-phospho-alpha-D-ribose 1-diphosphate contacts are provided by residues Gly-78, Gly-81–Asp-82, Thr-86, Asn-88–Thr-91, Lys-106–Ser-114, and Ser-118. Gly-78 serves as a coordination point for anthranilate. Position 90 (Ser-90) interacts with Mg(2+). Anthranilate is bound at residue Asn-109. Arg-164 is a binding site for anthranilate. Mg(2+) is bound by residues Asp-222 and Glu-223.

The protein belongs to the anthranilate phosphoribosyltransferase family. In terms of assembly, homodimer. Requires Mg(2+) as cofactor.

It catalyses the reaction N-(5-phospho-beta-D-ribosyl)anthranilate + diphosphate = 5-phospho-alpha-D-ribose 1-diphosphate + anthranilate. The protein operates within amino-acid biosynthesis; L-tryptophan biosynthesis; L-tryptophan from chorismate: step 2/5. Its function is as follows. Catalyzes the transfer of the phosphoribosyl group of 5-phosphorylribose-1-pyrophosphate (PRPP) to anthranilate to yield N-(5'-phosphoribosyl)-anthranilate (PRA). The sequence is that of Anthranilate phosphoribosyltransferase from Haloferax volcanii (strain ATCC 29605 / DSM 3757 / JCM 8879 / NBRC 14742 / NCIMB 2012 / VKM B-1768 / DS2) (Halobacterium volcanii).